The primary structure comprises 152 residues: UPF0266 membrane protein Ent638_2389 (152 aa).

The next 3 helical transmembrane spans lie at 6–26 (IVLVLFIVALLAYAFYDEFIM), 45–65 (VDAFIFAGLLAILIYNNVMSQ), and 67–87 (ALLTTWLLCVLALMAFYLFWI).

The protein belongs to the UPF0266 family.

The protein localises to the cell inner membrane. The chain is UPF0266 membrane protein Ent638_2389 from Enterobacter sp. (strain 638).